A 424-amino-acid chain; its full sequence is UDP-N-acetylglucosamine 1-carboxyvinyltransferase (424 aa).

22–23 (KN) is a phosphoenolpyruvate binding site. Arg-96 lines the UDP-N-acetyl-alpha-D-glucosamine pocket. Cys-120 functions as the Proton donor in the catalytic mechanism. Position 120 is a 2-(S-cysteinyl)pyruvic acid O-phosphothioketal (Cys-120). UDP-N-acetyl-alpha-D-glucosamine contacts are provided by residues 125 to 129 (RPVDQ), Asp-312, and Ile-334.

The protein belongs to the EPSP synthase family. MurA subfamily.

The protein resides in the cytoplasm. It catalyses the reaction phosphoenolpyruvate + UDP-N-acetyl-alpha-D-glucosamine = UDP-N-acetyl-3-O-(1-carboxyvinyl)-alpha-D-glucosamine + phosphate. The protein operates within cell wall biogenesis; peptidoglycan biosynthesis. Functionally, cell wall formation. Adds enolpyruvyl to UDP-N-acetylglucosamine. This chain is UDP-N-acetylglucosamine 1-carboxyvinyltransferase, found in Polynucleobacter asymbioticus (strain DSM 18221 / CIP 109841 / QLW-P1DMWA-1) (Polynucleobacter necessarius subsp. asymbioticus).